Consider the following 446-residue polypeptide: Phosphoglucosamine mutase (446 aa).

Residue Ser-99 is the Phosphoserine intermediate of the active site. Ser-99, Asp-242, Asp-244, and Asp-246 together coordinate Mg(2+). Ser-99 carries the phosphoserine modification.

The protein belongs to the phosphohexose mutase family. Requires Mg(2+) as cofactor. Activated by phosphorylation.

It catalyses the reaction alpha-D-glucosamine 1-phosphate = D-glucosamine 6-phosphate. Catalyzes the conversion of glucosamine-6-phosphate to glucosamine-1-phosphate. The sequence is that of Phosphoglucosamine mutase from Campylobacter concisus (strain 13826).